A 218-amino-acid chain; its full sequence is Cytochrome b6 (218 aa).

The chain crosses the membrane as a helical span at residues 35 to 55 (IFYCLGGITLVCFLIQFATGF). Residue Cys38 participates in heme c binding. Residues His89 and His103 each coordinate heme b. 3 helical membrane passes run 93–113 (ASMMVLMLILHVFRVYLTGGF), 119–139 (LTWVTGVTMAVITVSFGVTGY), and 189–209 (LHTFVMPWLLAVFMLMHFLMI). Positions 190 and 205 each coordinate heme b.

The protein belongs to the cytochrome b family. PetB subfamily. In terms of assembly, the 4 large subunits of the cytochrome b6-f complex are cytochrome b6, subunit IV (17 kDa polypeptide, PetD), cytochrome f and the Rieske protein, while the 4 small subunits are PetG, PetL, PetM and PetN. The complex functions as a dimer. Heme b serves as cofactor. Requires heme c as cofactor.

The protein localises to the cellular thylakoid membrane. Functionally, component of the cytochrome b6-f complex, which mediates electron transfer between photosystem II (PSII) and photosystem I (PSI), cyclic electron flow around PSI, and state transitions. The chain is Cytochrome b6 from Parasynechococcus marenigrum (strain WH8102).